The sequence spans 371 residues: Deoxyhypusine synthase (371 aa).

Residues 112 to 116 (SNLVT), 138 to 140 (SAG), Glu144, and Asp245 each bind NAD(+). A spermidine-binding site is contributed by 143–144 (EE). Asp250 contributes to the spermidine binding site. Gly291 contributes to the NAD(+) binding site. Position 296 (His296) interacts with spermidine. 316-317 (TG) contacts NAD(+). Residues 322–324 (GSD) and 331–337 (EAVSWGK) each bind spermidine. Catalysis depends on Lys337, which acts as the Nucleophile. 350-351 (EA) serves as a coordination point for NAD(+).

This sequence belongs to the deoxyhypusine synthase family. It depends on NAD(+) as a cofactor.

The catalysed reaction is [eIF5A protein]-L-lysine + spermidine = [eIF5A protein]-deoxyhypusine + propane-1,3-diamine. Its pathway is protein modification; eIF5A hypusination. Catalyzes the NAD-dependent oxidative cleavage of spermidine and the subsequent transfer of the butylamine moiety of spermidine to the epsilon-amino group of a critical lysine residue of the eIF-5A precursor protein to form the intermediate deoxyhypusine residue. This is the first step of the post-translational modification of that lysine into an unusual amino acid residue named hypusine. Hypusination is unique to mature eIF-5A factor and is essential for its function. This chain is Deoxyhypusine synthase, found in Caenorhabditis elegans.